The chain runs to 156 residues: Large ribosomal subunit protein uL23 (156 aa).

The span at 1-19 (MAPKAKKEAPAPPKVEAKA) shows a compositional bias: basic and acidic residues. Positions 1-67 (MAPKAKKEAP…PKYPRKSAPR (67 aa)) are disordered. Alanine 2 bears the N,N,N-trimethylalanine mark. A Glycyl lysine isopeptide (Lys-Gly) (interchain with G-Cter in SUMO2) cross-link involves residue lysine 14. The segment covering 20 to 67 (KALKAKKAVLKGVHSHKKKKIRTSPTFRRPKTLRLRRQPKYPRKSAPR) has biased composition (basic residues). Residues 32–74 (VHSHKKKKIRTSPTFRRPKTLRLRRQPKYPRKSAPRRNKLDHY) form a beta-like import receptor binding (BIB) domain region. Arginine 41 carries the citrulline modification. Serine 43 is subject to Phosphoserine. A Phosphothreonine modification is found at threonine 45. Lysine 70 is modified (N6-acetyllysine).

It belongs to the universal ribosomal protein uL23 family. In terms of assembly, component of the large ribosomal subunit. Interacts with LYAR and GNL2. Interacts with MDM2; this interaction may promote MDM2-mediated p53/TP53 polyubiquitination. Directly interacts (via BIB domain) with IPO5, IPO7, KPNB1 and TNPO1; these interactions are involved in RPL23A nuclear import for the assembly of ribosomal subunits. Interacts with IPO8. N-terminus is methylated by METTL11A/NTM1. Post-translationally, citrullinated by PADI4.

It is found in the cytoplasm. Its subcellular location is the nucleus. Component of the large ribosomal subunit. The ribosome is a large ribonucleoprotein complex responsible for the synthesis of proteins in the cell. Binds a specific region on the 26S rRNA. May promote p53/TP53 degradation possibly through the stimulation of MDM2-mediated TP53 polyubiquitination. The chain is Large ribosomal subunit protein uL23 (RPL23A) from Oryctolagus cuniculus (Rabbit).